The primary structure comprises 1883 residues: Nuclear pore complex protein Nup153 (1883 aa).

Over residues 1–17 (MEDAQEQRESSQAELAK) the composition is skewed to basic and acidic residues. 9 disordered regions span residues 1 to 57 (MEDA…SIMG), 70 to 116 (SLSG…RRIM), 176 to 227 (AVAA…LELE), 400 to 439 (RSEL…HYNS), 498 to 518 (RLLS…SPFY), 580 to 604 (PSDS…TGLS), 627 to 657 (MGSS…SASR), 694 to 769 (TQNS…LPQI), and 791 to 812 (VSKP…NLST). A compositionally biased stretch (acidic residues) spans 29 to 41 (EESEEEEEEEDES). Residues 73–101 (GWFSPSSKDGNDALSSPANLRQSQPRQSN) are compositionally biased toward polar residues. A compositionally biased stretch (basic residues) spans 105 to 115 (TTKRKRGRRRI). Residues 182–209 (GDEDEAEEDELEEDDEDGDEEDDDEEQE) show a composition bias toward acidic residues. Over residues 420 to 433 (NEYHDNGEGHDGLR) the composition is skewed to basic and acidic residues. The span at 498-515 (RLLSGSASNSGSASASSS) shows a compositional bias: low complexity. The span at 582–591 (DSGSLAETSV) shows a compositional bias: polar residues. Positions 627 to 636 (MGSSIKEHQS) are enriched in basic and acidic residues. Composition is skewed to polar residues over residues 637–657 (SRQQ…SASR) and 694–706 (TQNS…SQNV). Positions 736–748 (HTNKMRSRLSHQT) are enriched in basic residues. Residues 802–812 (SSKSSNTNLST) are compositionally biased toward low complexity. 5 consecutive RanBP2-type zinc fingers follow at residues 903-932 (SSKE…AKPV), 962-993 (KKST…PRKT), 1009-1038 (KSNE…AKPG), 1067-1097 (KSAT…PRKS), and 1126-1155 (KANM…PNSQ). 16 residues coordinate Zn(2+): Cys-909, Cys-912, Cys-923, Cys-926, Cys-970, Cys-973, Cys-984, Cys-987, Cys-1015, Cys-1018, Cys-1029, Cys-1032, Cys-1074, Cys-1077, Cys-1088, and Cys-1091. The interval 1173 to 1197 (SASFSGSLSRPSSRSSSGSTSTCGS) is disordered. A RanBP2-type 6 zinc finger spans residues 1237-1266 (KTSTWECEACLAKNDMSRKTCICCEQMMPE). 22 consecutive repeat copies span residues 1287-1288 (FG), 1315-1316 (FG), 1317-1318 (FG), 1340-1341 (FG), 1353-1354 (FG), 1415-1416 (FG), 1469-1470 (FG), 1511-1512 (FG), 1528-1529 (FG), 1548-1549 (FG), 1586-1587 (FG), 1599-1600 (FG), 1613-1614 (FG), 1647-1648 (FG), 1653-1654 (FG), 1672-1673 (FG), 1694-1695 (FG), 1724-1725 (FG), 1737-1738 (FG), 1748-1749 (FG), 1768-1769 (FG), and 1785-1786 (FG). The 22 X 2 AA repeats of F-G stretch occupies residues 1287-1786 (FGFSHVKEVV…AASSAPFVFG (500 aa)). Polar residues predominate over residues 1301 to 1323 (ETTTTPAPTSAQFSFGFGQSNQG). The disordered stretch occupies residues 1301–1331 (ETTTTPAPTSAQFSFGFGQSNQGKDVADSKK). Residues 1449–1473 (SAVSSTSSSQQPVAKAPTLGFGVSS) are disordered. The disordered stretch occupies residues 1597-1616 (TTFGASSGSGTTTTPSFGWS). The tract at residues 1855-1883 (NPPAAGNSAQSSQTARRKIRAPVRRLPPR) is disordered. Over residues 1869-1883 (ARRKIRAPVRRLPPR) the composition is skewed to basic residues.

This sequence belongs to the NUP153 family. In terms of assembly, part of the nuclear pore complex (NPC). Associates with male-specific lethal (MSL) histone acetyltransferase complex. Zn(2+) is required as a cofactor. As to expression, expressed in adult male accessory glands (at protein level).

Its subcellular location is the nucleus. It localises to the nucleus membrane. The protein resides in the nuclear pore complex. The protein localises to the chromosome. It is found in the cytoplasm. Its subcellular location is the cytoskeleton. It localises to the spindle. Its function is as follows. Component of the nuclear pore complex (NPC), a complex required for the trafficking across the nuclear envelope. Functions as a scaffolding element in the nuclear phase of the NPC. Essential for the nuclear import of nuclear localization signal (NLS)-containing proteins in a Importin alpha/Importin beta receptor-dependent manner. Required for nuclear import of Mad. Plays a role in chromosomal organization and gene expression regulation; stimulates transcription by promoting the formation of an open chromatin environment. Binds chromatin to nucleoporin-associated regions (NARs) that define transcriptionally active regions of the genome. Associates with extended chromosomal regions that alternate between domains of high density binding with those of low occupancy. Preferentially binds to NARs of the male X chromosome. In males, together with Mgtor, required for the localization of the male-specific lethal (MSL) histone acetyltransferase complex to the X chromosome and therefore for the transcription of dosage compensation genes. May play a role in double strand break DNA repair. The chain is Nuclear pore complex protein Nup153 (Nup153) from Drosophila melanogaster (Fruit fly).